A 220-amino-acid chain; its full sequence is Putative O-methyltransferase Mmcs_3995 (220 aa).

S-adenosyl-L-methionine-binding positions include V47, E69, 71 to 72 (GT), S77, D95, and V96. D143 lines the substrate pocket. D145 is an S-adenosyl-L-methionine binding site.

Belongs to the class I-like SAM-binding methyltransferase superfamily. Cation-dependent O-methyltransferase family.

The protein is Putative O-methyltransferase Mmcs_3995 of Mycobacterium sp. (strain MCS).